The primary structure comprises 484 residues: MTTGVQTLKNYIGGQWVESRSGKTEAVPNPATGEVLAYVPISSREELDEAVRAAKEAFKTWRKTPVPRRARILFKYQQLLVEHWEELARLVTLENGKSYNEAYGEVQRGIECVEFAAGAPTLMMGRQLPDIATGIESGMYRYPIGVVGGITPFNFPMMVPCWMFPLAIACGNTFVLKPSERTPMLANRLAELFKEAGLPDGVLNIVHGAHDVVNGLLEHPDVKAISFVGSQPVGEYVYKTAAAHGKRVQALTGAKNHSIVMPDADLNVAVREIINAAFGSAGERCMAASVVVAVGEIADELVEKLVAAANELKIGNGLEESVFLGPVIREAHKQRTVKYIELGEKEGAILVRDGRKDAAVQDNGYFIGPTIFDRVTTDMTIWKDEIFAPVLSIVRVETLDEAIEVANKSPFANGACIYTRDGGNVRKFREEIDAGMLGVNLGVPAPMAFFPFSGWKNSFYGDLHANGMDGVEFYTRKKMMTSRW.

Residues phenylalanine 153, lysine 177, glutamate 180, arginine 181, serine 230, and threonine 252 each coordinate NAD(+). The Nucleophile role is filled by cysteine 285. Glutamate 385 is an NAD(+) binding site.

It belongs to the aldehyde dehydrogenase family. IolA subfamily. As to quaternary structure, homotetramer.

The enzyme catalyses 3-oxopropanoate + NAD(+) + CoA + H2O = hydrogencarbonate + acetyl-CoA + NADH + H(+). It carries out the reaction 2-methyl-3-oxopropanoate + NAD(+) + CoA + H2O = propanoyl-CoA + hydrogencarbonate + NADH + H(+). Its pathway is polyol metabolism; myo-inositol degradation into acetyl-CoA; acetyl-CoA from myo-inositol: step 7/7. Its function is as follows. Catalyzes the oxidation of malonate semialdehyde (MSA) and methylmalonate semialdehyde (MMSA) into acetyl-CoA and propanoyl-CoA, respectively. Is involved in a myo-inositol catabolic pathway. Bicarbonate, and not CO2, is the end-product of the enzymatic reaction. The sequence is that of Malonate-semialdehyde dehydrogenase 2 from Geobacillus kaustophilus (strain HTA426).